Consider the following 286-residue polypeptide: Mitochondrial dicarboxylate carrier (286 aa).

3 Solcar repeats span residues 7-87, 100-187, and 196-279; these read SRWY…MRDY, SKVL…AKQL, and DNIF…LRKH. Helical transmembrane passes span 9–29, 62–81, and 102–122; these read WYFG…LDLL, GLSA…FAIY, and VLLG…ADLV. Lys-158 is subject to N6-acetyllysine. A run of 3 helical transmembrane segments spans residues 162–181, 202–222, and 254–274; these read GATM…LSCY, FLSS…LDVL, and GLVP…MFLE.

This sequence belongs to the mitochondrial carrier (TC 2.A.29) family. As to expression, expressed most strongly in liver, then kidney, and at lower levels in heart and brain.

It is found in the mitochondrion inner membrane. It carries out the reaction (S)-malate(in) + phosphate(out) = (S)-malate(out) + phosphate(in). It catalyses the reaction malonate(out) + (S)-malate(in) = malonate(in) + (S)-malate(out). The enzyme catalyses (S)-malate(in) + succinate(out) = (S)-malate(out) + succinate(in). The catalysed reaction is (S)-malate(in) + sulfate(out) = (S)-malate(out) + sulfate(in). It carries out the reaction malonate(out) + phosphate(in) = malonate(in) + phosphate(out). It catalyses the reaction succinate(out) + phosphate(in) = succinate(in) + phosphate(out). The enzyme catalyses sulfate(out) + phosphate(in) = sulfate(in) + phosphate(out). The catalysed reaction is malonate(out) + succinate(in) = malonate(in) + succinate(out). Its function is as follows. Catalyzes the electroneutral exchange or flux of physiologically important metabolites such as dicarboxylates (malonate, malate, succinate), inorganic sulfur-containing anions, and phosphate, across mitochondrial inner membrane. Plays an important role in gluconeogenesis, fatty acid metabolism, urea synthesis, and sulfur metabolism, particularly in liver, by supplying the substrates for the different metabolic processes. Regulates fatty acid release from adipocytes, and contributes to systemic insulin sensitivity. The sequence is that of Mitochondrial dicarboxylate carrier from Rattus norvegicus (Rat).